The chain runs to 160 residues: UPF0178 protein PA14_69280 (160 aa).

It belongs to the UPF0178 family.

The protein is UPF0178 protein PA14_69280 of Pseudomonas aeruginosa (strain UCBPP-PA14).